The sequence spans 320 residues: Malate dehydrogenase (320 aa).

NAD(+) contacts are provided by residues 10-15 and D34; that span reads GAGQIG. Substrate contacts are provided by R83 and R89. NAD(+) is bound by residues N96 and 119 to 121; that span reads ITN. Residues N121 and R152 each contribute to the substrate site. H176 acts as the Proton acceptor in catalysis.

It belongs to the LDH/MDH superfamily. MDH type 3 family.

It carries out the reaction (S)-malate + NAD(+) = oxaloacetate + NADH + H(+). In terms of biological role, catalyzes the reversible oxidation of malate to oxaloacetate. The polypeptide is Malate dehydrogenase (Roseobacter denitrificans (strain ATCC 33942 / OCh 114) (Erythrobacter sp. (strain OCh 114))).